Here is a 442-residue protein sequence, read N- to C-terminus: Alpha-1,6-mannosyl-glycoprotein 2-beta-N-acetylglucosaminyltransferase (442 aa).

The Cytoplasmic segment spans residues 1 to 9 (MRFRIYKRK). Residues 10–29 (VLILTLVVAACGFVLWSSNG) traverse the membrane as a helical; Signal-anchor for type II membrane protein segment. Residues 30-442 (RQRKSDALGP…ELCKSYRRLQ (413 aa)) are Lumenal-facing. N-linked (GlcNAc...) asparagine glycosylation is found at N64 and N81. Substrate-binding positions include 118–122 (QVHNR) and D149. C191 and C205 are oxidised to a cystine. A substrate-binding site is contributed by 224 to 228 (QTKHH). Position 256 (D256) interacts with Mn(2+). A disulfide bond links C278 and C281. Residue R293 participates in substrate binding. 3 cysteine pairs are disulfide-bonded: C329/C352, C334/C435, and C373/C381. H369 is a binding site for Mn(2+).

It belongs to the glycosyltransferase 16 (GT16) protein family. As to quaternary structure, homodimer. The cofactor is Mn(2+). In terms of tissue distribution, detected in liver, lung, testis, kidney, brain, spleen, thymus, uterus and intestine.

It is found in the golgi apparatus membrane. The catalysed reaction is an N(4)-{beta-D-GlcNAc-(1-&gt;2)-alpha-D-Man-(1-&gt;3)-[alpha-D-Man-(1-&gt;6)]-beta-D-Man-(1-&gt;4)-beta-D-GlcNAc-(1-&gt;4)-beta-D-GlcNAc}-L-asparaginyl-[protein] + UDP-N-acetyl-alpha-D-glucosamine = N(4)-{beta-D-GlcNAc-(1-&gt;2)-alpha-D-Man-(1-&gt;3)-[beta-D-GlcNAc-(1-&gt;2)-alpha-D-Man-(1-&gt;6)]-beta-D-Man-(1-&gt;4)-beta-D-GlcNAc-(1-&gt;4)-beta-D-GlcNAc}-L-asparaginyl-[protein] + UDP + H(+). Its pathway is protein modification; protein glycosylation. Plays an essential role in protein N-glycosylation. Catalyzes the transfer of N-acetylglucosamine (GlcNAc) onto the free terminal mannose moiety in the core structure of the nascent N-linked glycan chain, giving rise to the second branch in complex glycans. This Mus musculus (Mouse) protein is Alpha-1,6-mannosyl-glycoprotein 2-beta-N-acetylglucosaminyltransferase (Mgat2).